Consider the following 442-residue polypeptide: tRNA modification GTPase MnmE (442 aa).

Arg-27, Glu-84, and Lys-124 together coordinate (6S)-5-formyl-5,6,7,8-tetrahydrofolate. The region spanning 221–366 is the TrmE-type G domain; the sequence is GLHVVIVGAP…LLDALQAFAE (146 aa). GTP is bound by residues 231–236, 250–256, and 275–278; these read NAGKSS, SEEAGTT, and DTAG. Mg(2+)-binding residues include Ser-235 and Thr-256. Lys-442 is a binding site for (6S)-5-formyl-5,6,7,8-tetrahydrofolate.

The protein belongs to the TRAFAC class TrmE-Era-EngA-EngB-Septin-like GTPase superfamily. TrmE GTPase family. Homodimer. Heterotetramer of two MnmE and two MnmG subunits. The cofactor is K(+).

It localises to the cytoplasm. In terms of biological role, exhibits a very high intrinsic GTPase hydrolysis rate. Involved in the addition of a carboxymethylaminomethyl (cmnm) group at the wobble position (U34) of certain tRNAs, forming tRNA-cmnm(5)s(2)U34. The protein is tRNA modification GTPase MnmE of Brucella suis (strain ATCC 23445 / NCTC 10510).